A 60-amino-acid polypeptide reads, in one-letter code: Cytotoxin 7 (60 aa).

4 cysteine pairs are disulfide-bonded: cysteine 3–cysteine 21, cysteine 14–cysteine 38, cysteine 42–cysteine 53, and cysteine 54–cysteine 59.

It belongs to the three-finger toxin family. Short-chain subfamily. Type IA cytotoxin sub-subfamily. Monomer in solution; Homodimer and oligomer in the presence of negatively charged lipids forming a pore with a size ranging between 20 and 30 Angstroms. In terms of tissue distribution, expressed by the venom gland.

The protein localises to the secreted. It localises to the target cell membrane. In terms of biological role, shows cytolytic activity on many different cells by forming pore in lipid membranes. In vivo, increases heart rate or kills the animal by cardiac arrest. In addition, it binds to heparin with high affinity, interacts with Kv channel-interacting protein 1 (KCNIP1) in a calcium-independent manner, and binds to integrin alpha-V/beta-3 (ITGAV/ITGB3) with moderate affinity. The chain is Cytotoxin 7 from Naja annulifera (Banded Egyptian cobra).